Consider the following 414-residue polypeptide: Voltage-gated ClC-type chloride channel ClcB (414 aa).

11 consecutive transmembrane segments (helical) span residues 5-25 (LVISIMLGMVSALIVWLFHQA), 54-74 (ALTPALGGLAAGLLLWAYQRY), 116-136 (SAIGREGAMVLLAALFASVFA), 147-167 (LWVACGAAAGMASAYHAPLAG), 169-189 (LFIAEILFGTLMLASLGPVVI), 220-240 (VQYFLMALLGLMAGFSGPLFL), 255-275 (LLPPLQLALGGIIVGLLSLIF), 292-312 (TPPGVLLIGGILICKLLAVLA), 327-347 (LFVGAALGMLCGQIFSLWPVL), 353-373 (LLMALTGMATLLAATTHAPIM), and 381-401 (MTGEYTLLPGLLLSCVIATTI).

It belongs to the chloride channel (TC 2.A.49) family. ClcB subfamily.

It localises to the cell inner membrane. Its function is as follows. Probably acts as an electrical shunt for an outwardly-directed proton pump that is linked to amino acid decarboxylation, as part of the extreme acid resistance (XAR) response. The protein is Voltage-gated ClC-type chloride channel ClcB of Yersinia pseudotuberculosis serotype O:1b (strain IP 31758).